The chain runs to 132 residues: Ribosome-binding factor A (132 aa).

This sequence belongs to the RbfA family. In terms of assembly, monomer. Binds 30S ribosomal subunits, but not 50S ribosomal subunits or 70S ribosomes.

It is found in the cytoplasm. One of several proteins that assist in the late maturation steps of the functional core of the 30S ribosomal subunit. Associates with free 30S ribosomal subunits (but not with 30S subunits that are part of 70S ribosomes or polysomes). Required for efficient processing of 16S rRNA. May interact with the 5'-terminal helix region of 16S rRNA. This chain is Ribosome-binding factor A, found in Rhizorhabdus wittichii (strain DSM 6014 / CCUG 31198 / JCM 15750 / NBRC 105917 / EY 4224 / RW1) (Sphingomonas wittichii).